A 140-amino-acid chain; its full sequence is Small ribosomal subunit protein uS11 (140 aa).

The interval 116 to 140 (GRVEDVTPIPHDGTRPKGGRRGRRV) is disordered.

The protein belongs to the universal ribosomal protein uS11 family. As to quaternary structure, part of the 30S ribosomal subunit.

Functionally, located on the platform of the 30S subunit. This is Small ribosomal subunit protein uS11 from Thermococcus kodakarensis (strain ATCC BAA-918 / JCM 12380 / KOD1) (Pyrococcus kodakaraensis (strain KOD1)).